Consider the following 602-residue polypeptide: Type II restriction enzyme StsI (602 aa).

It catalyses the reaction Endonucleolytic cleavage of DNA to give specific double-stranded fragments with terminal 5'-phosphates.. In terms of biological role, an S subtype restriction enzyme that recognizes the double-stranded sequences 5'-GGATG-3' and 3'-CATCC-5' and cleaves respectively 15 bases after G-1 and 14 bases before C-1. This is Type II restriction enzyme StsI (stsIR) from Streptococcus sanguinis.